We begin with the raw amino-acid sequence, 210 residues long: Glycerol-3-phosphate acyltransferase (210 aa).

The next 5 helical transmembrane spans lie at 1 to 21 (MLLS…FPAG), 53 to 73 (GPAL…VVAA), 87 to 107 (IAWL…LPVW), 122 to 142 (VLLA…LLLL), and 147 to 167 (IVSL…LILP).

The protein belongs to the PlsY family. Probably interacts with PlsX.

It localises to the cell inner membrane. The catalysed reaction is an acyl phosphate + sn-glycerol 3-phosphate = a 1-acyl-sn-glycero-3-phosphate + phosphate. It functions in the pathway lipid metabolism; phospholipid metabolism. Functionally, catalyzes the transfer of an acyl group from acyl-phosphate (acyl-PO(4)) to glycerol-3-phosphate (G3P) to form lysophosphatidic acid (LPA). This enzyme utilizes acyl-phosphate as fatty acyl donor, but not acyl-CoA or acyl-ACP. The protein is Glycerol-3-phosphate acyltransferase of Synechococcus elongatus (strain ATCC 33912 / PCC 7942 / FACHB-805) (Anacystis nidulans R2).